The chain runs to 347 residues: GMP reductase (347 aa).

108 to 131 contributes to the NADP(+) binding site; that stretch reads ADFEKTKQILDLNPALNFVCIDVA. K(+)-binding residues include Gly181 and Gly183. The active-site Thioimidate intermediate is Cys186. 216–239 is an NADP(+) binding site; the sequence is IVSDGGCTTPGDVAKAFGGGADFV.

The protein belongs to the IMPDH/GMPR family. GuaC type 1 subfamily. As to quaternary structure, homotetramer.

It catalyses the reaction IMP + NH4(+) + NADP(+) = GMP + NADPH + 2 H(+). In terms of biological role, catalyzes the irreversible NADPH-dependent deamination of GMP to IMP. It functions in the conversion of nucleobase, nucleoside and nucleotide derivatives of G to A nucleotides, and in maintaining the intracellular balance of A and G nucleotides. In Shigella flexneri, this protein is GMP reductase.